The sequence spans 209 residues: Large ribosomal subunit protein uL4 (209 aa).

The segment at 50–78 (STLKKGEVSGGGKKPYQQKHTGRARQGSI) is disordered.

It belongs to the universal ribosomal protein uL4 family. Part of the 50S ribosomal subunit.

In terms of biological role, one of the primary rRNA binding proteins, this protein initially binds near the 5'-end of the 23S rRNA. It is important during the early stages of 50S assembly. It makes multiple contacts with different domains of the 23S rRNA in the assembled 50S subunit and ribosome. Forms part of the polypeptide exit tunnel. The sequence is that of Large ribosomal subunit protein uL4 from Mycoplasmoides gallisepticum (strain R(low / passage 15 / clone 2)) (Mycoplasma gallisepticum).